Consider the following 607-residue polypeptide: Elongation factor 4 (607 aa).

The 183-residue stretch at 11–193 (KSIRNFSIIA…QIVAKVPAPT (183 aa)) folds into the tr-type G domain. Residues 23-28 (DHGKST) and 140-143 (NKID) each bind GTP.

The protein belongs to the TRAFAC class translation factor GTPase superfamily. Classic translation factor GTPase family. LepA subfamily.

The protein localises to the cell membrane. The enzyme catalyses GTP + H2O = GDP + phosphate + H(+). Its function is as follows. Required for accurate and efficient protein synthesis under certain stress conditions. May act as a fidelity factor of the translation reaction, by catalyzing a one-codon backward translocation of tRNAs on improperly translocated ribosomes. Back-translocation proceeds from a post-translocation (POST) complex to a pre-translocation (PRE) complex, thus giving elongation factor G a second chance to translocate the tRNAs correctly. Binds to ribosomes in a GTP-dependent manner. This chain is Elongation factor 4, found in Exiguobacterium sibiricum (strain DSM 17290 / CCUG 55495 / CIP 109462 / JCM 13490 / 255-15).